The chain runs to 173 residues: Inorganic pyrophosphatase (173 aa).

K28, R42, and Y54 together coordinate substrate. Mg(2+) contacts are provided by D64, D69, and D101. Y140 is a substrate binding site.

It belongs to the PPase family. Homohexamer. Requires Mg(2+) as cofactor.

It localises to the cytoplasm. It carries out the reaction diphosphate + H2O = 2 phosphate + H(+). In terms of biological role, catalyzes the hydrolysis of inorganic pyrophosphate (PPi) forming two phosphate ions. The sequence is that of Inorganic pyrophosphatase from Helicobacter pylori (strain J99 / ATCC 700824) (Campylobacter pylori J99).